The chain runs to 149 residues: L-alanine exporter AlaE (149 aa).

A run of 4 helical transmembrane segments spans residues 16–36, 46–66, 85–105, and 112–132; these read FAMV…LSGM, LVAI…RDAI, VLAY…TVGA, and AAVS…GYFL.

It belongs to the AlaE exporter family.

The protein resides in the cell inner membrane. Functionally, exports L-alanine. This Citrobacter koseri (strain ATCC BAA-895 / CDC 4225-83 / SGSC4696) protein is L-alanine exporter AlaE.